Reading from the N-terminus, the 189-residue chain is HGPRTase-like protein (189 aa).

Belongs to the purine/pyrimidine phosphoribosyltransferase family. Archaeal HPRT subfamily.

May catalyze a purine salvage reaction, the substrate is unknown. The protein is HGPRTase-like protein of Natronomonas pharaonis (strain ATCC 35678 / DSM 2160 / CIP 103997 / JCM 8858 / NBRC 14720 / NCIMB 2260 / Gabara) (Halobacterium pharaonis).